The following is a 312-amino-acid chain: Olfactory receptor 1500 (312 aa).

The Extracellular portion of the chain corresponds to 1–25; the sequence is MTGNNQTLILEFLLLGLPIPSEYHL. The N-linked (GlcNAc...) asparagine glycan is linked to Asn5. The chain crosses the membrane as a helical span at residues 26–49; that stretch reads LFYALFLAMYLTIILGNLLIIVLV. Over 50-57 the chain is Cytoplasmic; sequence RLDSHLHM. The helical transmembrane segment at 58 to 79 threads the bilayer; it reads PMYLFLSNLSFSDLCFSSVTMP. At 80–100 the chain is on the extracellular side; that stretch reads KLLQNMQSQVPSISYTGCLTQ. A disulfide bond links Cys97 and Cys189. The helical transmembrane segment at 101–120 threads the bilayer; the sequence is LYFFMVFGDMESFLLVVMAY. Over 121-139 the chain is Cytoplasmic; that stretch reads DRYVAICFPLRYTTIMSTK. A helical transmembrane segment spans residues 140–158; it reads FCASLVLLLWMLTMTHALL. At 159–196 the chain is on the extracellular side; the sequence is HTLLIARLSFCEKNVILHFFCDISALLKLSCSDIYVNE. Residues 197–219 form a helical membrane-spanning segment; that stretch reads LMIYILGGLIIIIPFLLIVMSYV. The Cytoplasmic portion of the chain corresponds to 220–236; that stretch reads RIFFSILKFPSIQDIYK. A helical transmembrane segment spans residues 237–260; sequence VFSTCGSHLSVVTLFYGTIFGIYL. Residues 261–272 lie on the Extracellular side of the membrane; that stretch reads CPSGNNSTVKEI. A helical membrane pass occupies residues 273 to 292; it reads AMAMMYTVVTPMLNPFIYSL. Residues 293–312 lie on the Cytoplasmic side of the membrane; that stretch reads RNRDMKRALIRVICTKKISL.

It belongs to the G-protein coupled receptor 1 family. Olfactory epithelium.

It is found in the cell membrane. In terms of biological role, odorant receptor. In Rattus norvegicus (Rat), this protein is Olfactory receptor 1500 (Olr1500).